The primary structure comprises 270 residues: Surfeit locus protein 4 homolog (270 aa).

The next 6 membrane-spanning stretches (helical) occupy residues 65–85 (FLAT…CGMV), 93–113 (IAVG…SILW), 115–135 (FQFL…LAEA), 178–198 (LSVW…LVVL), 206–226 (ALIL…WWTI), and 243–263 (TLSV…GVSM). Residues 267–270 (KKKW) carry the Di-lysine motif motif.

The protein belongs to the SURF4 family.

Its subcellular location is the endoplasmic reticulum membrane. Its function is as follows. Endoplasmic reticulum cargo receptor that mediates the export of lipoproteins by recruiting cargos into COPII vesicles to facilitate their secretion. This is Surfeit locus protein 4 homolog from Drosophila melanogaster (Fruit fly).